The chain runs to 356 residues: tRNA-specific 2-thiouridylase MnmA 1 (356 aa).

ATP is bound by residues 8 to 15 (GMSGGVDS) and methionine 34. Cysteine 103 functions as the Nucleophile in the catalytic mechanism. A disulfide bridge connects residues cysteine 103 and cysteine 199. Glycine 127 contributes to the ATP binding site. Residues 149 to 151 (KDQ) are interaction with tRNA. Cysteine 199 acts as the Cysteine persulfide intermediate in catalysis. Residues 305–306 (RY) form an interaction with tRNA region.

It belongs to the MnmA/TRMU family.

It localises to the cytoplasm. The catalysed reaction is S-sulfanyl-L-cysteinyl-[protein] + uridine(34) in tRNA + AH2 + ATP = 2-thiouridine(34) in tRNA + L-cysteinyl-[protein] + A + AMP + diphosphate + H(+). Its function is as follows. Catalyzes the 2-thiolation of uridine at the wobble position (U34) of tRNA, leading to the formation of s(2)U34. The protein is tRNA-specific 2-thiouridylase MnmA 1 of Clostridium botulinum (strain ATCC 19397 / Type A).